The primary structure comprises 519 residues: Flavonoid 8-hydroxylase 2, chloroplastic (519 aa).

A chloroplast-targeting transit peptide spans 1-46 (MEVLQASSLSFQLLRRHSRNNLINKFRNPSLPRIHMPRQNIDLKTF). In terms of domain architecture, Rieske spans 77 to 188 (WYPVASVCDL…SCVRNGIVWF (112 aa)). 4 residues coordinate [2Fe-2S] cluster: C119, H121, C139, and H142. Fe cation is bound by residues H241 and H246. A Redox-active motif motif is present at residues 447 to 450 (CSSC). The next 2 helical transmembrane spans lie at 462 to 478 (IGLQ…AAAV) and 485 to 501 (YSMV…SKWL).

[2Fe-2S] cluster is required as a cofactor. As to expression, glandular trichome-specific expression in leaves.

The protein resides in the plastid. Its subcellular location is the chloroplast membrane. It is found in the cytoplasm. The catalysed reaction is salvigenin + 2 reduced [2Fe-2S]-[ferredoxin] + O2 + 2 H(+) = 8-hydroxysalvigenin + 2 oxidized [2Fe-2S]-[ferredoxin] + H2O. The protein operates within flavonoid metabolism. Functionally, rieske-type, PAO-family oxygenase involved in the biosynthesis of polymethoxylated flavonoids natural products such as nevadensin and salvigenin, aroma compounds which contribute to the flavor of sweet basil, and exhibit pharmacological activities such as anti-allergic, anti-oxidant, antibacterial, anti-proliferative, and anti-inflammatory effects. Catalyzes the hydroxylation of salvigenin to produce 8-hydroxysalvigenin (8-OH-SALV). In Ocimum basilicum (Sweet basil), this protein is Flavonoid 8-hydroxylase 2, chloroplastic.